The primary structure comprises 66 residues: Large ribosomal subunit protein bL33c (66 aa).

The protein belongs to the bacterial ribosomal protein bL33 family.

Its subcellular location is the plastid. It is found in the chloroplast. This chain is Large ribosomal subunit protein bL33c, found in Saccharum officinarum (Sugarcane).